A 304-amino-acid polypeptide reads, in one-letter code: Probable aspartoacylase (304 aa).

Residues histidine 13 and glutamate 16 each coordinate Zn(2+). Substrate-binding positions include arginine 55 and 62–63; that span reads NR. Residue histidine 104 participates in Zn(2+) binding. Substrate-binding residues include glutamate 162 and tyrosine 272.

This sequence belongs to the AspA/AstE family. Aspartoacylase subfamily. Zn(2+) is required as a cofactor.

The enzyme catalyses an N-acyl-L-aspartate + H2O = a carboxylate + L-aspartate. In Synechococcus sp. (strain CC9605), this protein is Probable aspartoacylase.